A 191-amino-acid polypeptide reads, in one-letter code: Potassium-transporting ATPase KdpC subunit (191 aa).

The chain crosses the membrane as a helical span at residues 10 to 30 (ITLVFCVFFSVFYILVLWLFA).

It belongs to the KdpC family. The system is composed of three essential subunits: KdpA, KdpB and KdpC.

It localises to the cell inner membrane. Its function is as follows. Part of the high-affinity ATP-driven potassium transport (or Kdp) system, which catalyzes the hydrolysis of ATP coupled with the electrogenic transport of potassium into the cytoplasm. This subunit acts as a catalytic chaperone that increases the ATP-binding affinity of the ATP-hydrolyzing subunit KdpB by the formation of a transient KdpB/KdpC/ATP ternary complex. This Bacteroides fragilis (strain YCH46) protein is Potassium-transporting ATPase KdpC subunit.